A 143-amino-acid polypeptide reads, in one-letter code: Nucleoside diphosphate kinase (143 aa).

ATP-binding residues include Lys-11, Phe-59, Arg-87, Thr-93, Arg-104, and Asn-114. The Pros-phosphohistidine intermediate role is filled by His-117.

The protein belongs to the NDK family. In terms of assembly, homotetramer. It depends on Mg(2+) as a cofactor.

The protein resides in the cytoplasm. It catalyses the reaction a 2'-deoxyribonucleoside 5'-diphosphate + ATP = a 2'-deoxyribonucleoside 5'-triphosphate + ADP. The catalysed reaction is a ribonucleoside 5'-diphosphate + ATP = a ribonucleoside 5'-triphosphate + ADP. Its function is as follows. Major role in the synthesis of nucleoside triphosphates other than ATP. The ATP gamma phosphate is transferred to the NDP beta phosphate via a ping-pong mechanism, using a phosphorylated active-site intermediate. The chain is Nucleoside diphosphate kinase from Enterobacter sp. (strain 638).